Consider the following 138-residue polypeptide: MALLPDKEKLLRNFLRCANWEEKYLYIIELGQRLPELRDEDRSPQNSIQGCQNQVWIVMRQNAQGIIELQGDSDAAIVKGLIAVVFILYDQMTPQDIVNFDVRPWFEKMALTQHLTPSRSQGLEAMIRAIRAKAAALS.

The active-site Cysteine persulfide intermediate is C51.

It belongs to the SufE family. In terms of assembly, homodimer. Interacts with SufS.

Its subcellular location is the cytoplasm. It functions in the pathway cofactor biosynthesis; iron-sulfur cluster biosynthesis. Participates in cysteine desulfuration mediated by SufS. Cysteine desulfuration mobilizes sulfur from L-cysteine to yield L-alanine and constitutes an essential step in sulfur metabolism for biosynthesis of a variety of sulfur-containing biomolecules. Functions as a sulfur acceptor for SufS, by mediating the direct transfer of the sulfur atom from the S-sulfanylcysteine of SufS, an intermediate product of cysteine desulfuration process. This Shigella boydii serotype 18 (strain CDC 3083-94 / BS512) protein is Cysteine desulfuration protein SufE.